The sequence spans 197 residues: Na(+)-translocating NADH-quinone reductase subunit E (197 aa).

The next 6 membrane-spanning stretches (helical) occupy residues 11–31, 35–55, 76–96, 108–128, 139–159, and 175–195; these read SVFI…FLAV, VSTA…SVPA, FLKF…LEMF, LGIY…VSFM, VVYG…LAGI, and LGIT…FSGI.

This sequence belongs to the NqrDE/RnfAE family. As to quaternary structure, composed of six subunits; NqrA, NqrB, NqrC, NqrD, NqrE and NqrF.

It is found in the cell inner membrane. The catalysed reaction is a ubiquinone + n Na(+)(in) + NADH + H(+) = a ubiquinol + n Na(+)(out) + NAD(+). NQR complex catalyzes the reduction of ubiquinone-1 to ubiquinol by two successive reactions, coupled with the transport of Na(+) ions from the cytoplasm to the periplasm. NqrA to NqrE are probably involved in the second step, the conversion of ubisemiquinone to ubiquinol. The protein is Na(+)-translocating NADH-quinone reductase subunit E of Neisseria meningitidis serogroup A / serotype 4A (strain DSM 15465 / Z2491).